A 130-amino-acid polypeptide reads, in one-letter code: Small ribosomal subunit protein uS8 (130 aa).

Belongs to the universal ribosomal protein uS8 family. As to quaternary structure, part of the 30S ribosomal subunit. Contacts proteins S5 and S12.

Functionally, one of the primary rRNA binding proteins, it binds directly to 16S rRNA central domain where it helps coordinate assembly of the platform of the 30S subunit. In Phytoplasma mali (strain AT), this protein is Small ribosomal subunit protein uS8.